A 946-amino-acid chain; its full sequence is MNMKKKEKHAIRKKSIGVASVLVGTLIGFGLLSSKEADASENSVTQSDSASNESKSNDSSSVSAAPKTDDTNVSDTKTSSNTNNGETSVAQNPAQQETTQSALTNATTEETPVTGEATTATNQANTPATTQSSNTNAEELVNQTSNETTSNDTNTVSSVNSPQNSTNAENVSTTQDTSTEATPSNNESAPQSTDASNKDVVNQAVNTSAPRMRAFSLSAVAADAPAAGKDITNQLTNVTVGIDSGDTVYPHQAGYVKLNYGFSVPNSAVKGDTFKITVPKELNLNGVTSTAKVPPIMAGDQVLANGVIDSDGNVIYTFTDYVDTKENVTANITMPAYIDPENVTKTGNVTLTTGIGSTTANKTVLVDYEKYGKFYNLSIKGTIDQIDKTNNTYRQTIYVNPSGDNVIAPVLTGNLKPNTDSNALIDQQNTSIKVYKVDNAADLSESYFVNPENFEDVTNSVNITFPNPNQYKVEFNTPDDQITTPYIVVVNGHIDPNSKGDLALRSTLYGYDSRFVWRSMSWDNEVAFNNGSGSGDGIDKPVVPEQPDEPGEIEPIPEDSDSDPGSDSGSDSNSDSGSDSGSDSTSDSGSDSASDSDSASDSDSASDSDSASDSDSASDSDSASDSDSASDSDSASDSDSASDSDSDNDSDSDSDSDSDSDSDSDSDSDSDSDSDSDSDSDSDSDSDSDSDSDSDSDSDSDSDSDSDSDSDSDSDSDSDSDSDSDSDSDSDSDSDSDSDSDSDSDSDSNSDSDSDSDSDSDSDSDSDSDSDSDSDSDSDSDSDSASDSDSDSDSDSDSDSDSDSDSDSDSDSDSDSDSDSDSDSESDSDSESDSDSDSDSDSDSDSDSDSASDSDSGSDSDSSSDSDSESDSNSDSESGSNNNVVPPNSPKNGTNASNKNEAKDSKEPLPDTGSEDEANTSLIWGLLASIGSLLLFRRKKENKDKK.

An N-terminal signal peptide occupies residues 1–39; it reads MNMKKKEKHAIRKKSIGVASVLVGTLIGFGLLSSKEADA. The YSIRK-G/S signaling motif signature appears at 9–20; that stretch reads HAIRKKSIGVAS. Disordered stretches follow at residues 34 to 199 and 528 to 917; these read SKEA…SNKD and FNNG…SEDE. Residues 40-542 form a ligand binding A region region; it reads SENSVTQSDS…GSGDGIDKPV (503 aa). Residues 47–65 are compositionally biased toward low complexity; sequence SDSASNESKSNDSSSVSAA. The span at 71–111 shows a compositional bias: polar residues; it reads TNVSDTKTSSNTNNGETSVAQNPAQQETTQSALTNATTEET. Low complexity-rich tracts occupy residues 117-131 and 142-161; these read ATTA…ATTQ and NQTS…SVNS. The segment covering 162–199 has biased composition (polar residues); the sequence is PQNSTNAENVSTTQDTSTEATPSNNESAPQSTDASNKD. Residues 546 to 564 show a composition bias toward acidic residues; sequence QPDEPGEIEPIPEDSDSDP. Residues 565 to 597 show a composition bias toward low complexity; the sequence is GSDSGSDSNSDSGSDSGSDSTSDSGSDSASDSD. The segment covering 598–874 has biased composition (acidic residues); the sequence is SASDSDSASD…DSDSESDSNS (277 aa). Low complexity predominate over residues 875–893; it reads DSESGSNNNVVPPNSPKNG. A compositionally biased stretch (basic and acidic residues) spans 900–909; that stretch reads NEAKDSKEPL. Positions 909 to 913 match the LPXTG sorting signal motif; the sequence is LPDTG. A Pentaglycyl murein peptidoglycan amidated threonine modification is found at threonine 912. The propeptide at 913–946 is removed by sortase; it reads GSEDEANTSLIWGLLASIGSLLLFRRKKENKDKK.

The protein belongs to the serine-aspartate repeat-containing protein (SDr) family.

The protein localises to the secreted. The protein resides in the cell wall. In terms of biological role, cell surface-associated protein implicated in virulence. Promotes bacterial attachment exclusively to the gamma-chain of human fibrinogen. Induces formation of bacterial clumps. The chain is Clumping factor A (clfA) from Staphylococcus aureus (strain MW2).